The sequence spans 269 residues: Phosphonates import ATP-binding protein PhnC 2 (269 aa).

The region spanning 2 to 246 (LRIDSLSKRY…VLNEIYGEED (245 aa)) is the ABC transporter domain. 35-42 (GPSGAGKS) contributes to the ATP binding site. Residues 246 to 269 (DWNASGPAQDSEENEAVSAGVATH) are disordered.

It belongs to the ABC transporter superfamily. Phosphonates importer (TC 3.A.1.9.1) family. The complex is composed of two ATP-binding proteins (PhnC), two transmembrane proteins (PhnE) and a solute-binding protein (PhnD).

It localises to the cell inner membrane. The catalysed reaction is phosphonate(out) + ATP + H2O = phosphonate(in) + ADP + phosphate + H(+). Its function is as follows. Part of the ABC transporter complex PhnCDE involved in phosphonates import. Responsible for energy coupling to the transport system. This chain is Phosphonates import ATP-binding protein PhnC 2, found in Synechococcus sp. (strain JA-2-3B'a(2-13)) (Cyanobacteria bacterium Yellowstone B-Prime).